Consider the following 371-residue polypeptide: Queuine tRNA-ribosyltransferase (371 aa).

Asp-93 (proton acceptor) is an active-site residue. Residues 93–97 (DSGGF), Asp-147, Gln-191, and Gly-218 contribute to the substrate site. An RNA binding region spans residues 249–255 (GVGTVVD). The active-site Nucleophile is Asp-268. Residues 273-277 (TRNAR) are RNA binding; important for wobble base 34 recognition. Residues Cys-306, Cys-308, Cys-311, and His-337 each contribute to the Zn(2+) site.

Belongs to the queuine tRNA-ribosyltransferase family. In terms of assembly, homodimer. Within each dimer, one monomer is responsible for RNA recognition and catalysis, while the other monomer binds to the replacement base PreQ1. Zn(2+) serves as cofactor.

It catalyses the reaction 7-aminomethyl-7-carbaguanine + guanosine(34) in tRNA = 7-aminomethyl-7-carbaguanosine(34) in tRNA + guanine. Its pathway is tRNA modification; tRNA-queuosine biosynthesis. Functionally, catalyzes the base-exchange of a guanine (G) residue with the queuine precursor 7-aminomethyl-7-deazaguanine (PreQ1) at position 34 (anticodon wobble position) in tRNAs with GU(N) anticodons (tRNA-Asp, -Asn, -His and -Tyr). Catalysis occurs through a double-displacement mechanism. The nucleophile active site attacks the C1' of nucleotide 34 to detach the guanine base from the RNA, forming a covalent enzyme-RNA intermediate. The proton acceptor active site deprotonates the incoming PreQ1, allowing a nucleophilic attack on the C1' of the ribose to form the product. After dissociation, two additional enzymatic reactions on the tRNA convert PreQ1 to queuine (Q), resulting in the hypermodified nucleoside queuosine (7-(((4,5-cis-dihydroxy-2-cyclopenten-1-yl)amino)methyl)-7-deazaguanosine). In Leptospira biflexa serovar Patoc (strain Patoc 1 / Ames), this protein is Queuine tRNA-ribosyltransferase.